Reading from the N-terminus, the 694-residue chain is Scarecrow-like protein 33 (694 aa).

Residues 289–313 (PAKASTFSKSPKGEKPEASGNSYTK) form a disordered region. A GRAS domain is found at 309 to 692 (NSYTKETPDL…RIVYGSSIWV (384 aa)). The leucine repeat I (LRI) stretch occupies residues 316-376 (PDLRTMLVSC…EARLAGIGTQ (61 aa)). The VHIID stretch occupies residues 395–462 (YQTYISVCPF…GSSCKLRITG (68 aa)). Residues 428-432 (IHIID) carry the VHIID motif. The leucine repeat II (LRII) stretch occupies residues 478–510 (ETGRRLAKYCQKFNIPFEYNAIAQKWESIKLED). The PFYRE stretch occupies residues 519–613 (VAVNSLFRFR…KEFYGREIMN (95 aa)). An SAW region spans residues 616–692 (ACEGTERVER…RIVYGSSIWV (77 aa)).

The protein belongs to the GRAS family. As to quaternary structure, interacts with SNRNP35.

It localises to the nucleus. Its function is as follows. Probable transcription factor involved in plant development. The polypeptide is Scarecrow-like protein 33 (SCL33) (Arabidopsis thaliana (Mouse-ear cress)).